A 119-amino-acid chain; its full sequence is Anther-specific protein BCP1 (119 aa).

The first 23 residues, Met-1–Ala-23, serve as a signal peptide directing secretion. Residues Ala-24–Pro-42 are compositionally biased toward low complexity. The tract at residues Ala-24 to Ser-95 is disordered. The Extracellular segment spans residues Ala-24–Ala-98. Positions Thr-56 to Val-69 are enriched in acidic residues. Residues Gly-82–Ser-95 show a composition bias toward low complexity. Residues Ala-99–Phe-118 form a helical membrane-spanning segment. Residue Phe-119 is a topological domain, cytoplasmic.

As to expression, expressed in mature pollen grains, developing microspores and tapetal cells.

It is found in the membrane. In terms of biological role, required for pollen fertility and development. Active in both diploid tapetum and haploid microspores. Major pollen protein. The protein is Anther-specific protein BCP1 (BCP1) of Brassica campestris (Field mustard).